We begin with the raw amino-acid sequence, 354 residues long: Isocitrate dehydrogenase [NAD] regulatory subunit A, mitochondrial (354 aa).

Positions 95, 97, 101, 111, and 132 each coordinate substrate. The Mg(2+) site is built by Asp-219, Asp-243, and Asp-247. NADP(+) is bound by residues 276–282 (HGTAPDI) and Asn-289.

This sequence belongs to the isocitrate and isopropylmalate dehydrogenases family. Heterooligomer of catalytic and regulatory subunits. The cofactor is Mg(2+). It depends on Mn(2+) as a cofactor.

The protein localises to the mitochondrion. It carries out the reaction D-threo-isocitrate + NAD(+) = 2-oxoglutarate + CO2 + NADH. Functionally, performs an essential role in the oxidative function of the citric acid cycle. The polypeptide is Isocitrate dehydrogenase [NAD] regulatory subunit A, mitochondrial (idhA) (Dictyostelium discoideum (Social amoeba)).